Here is a 246-residue protein sequence, read N- to C-terminus: Probable transcriptional regulatory protein CLJ_B3338 (246 aa).

It belongs to the TACO1 family.

It is found in the cytoplasm. The sequence is that of Probable transcriptional regulatory protein CLJ_B3338 from Clostridium botulinum (strain 657 / Type Ba4).